Reading from the N-terminus, the 365-residue chain is MKLLIAGGGTGGHLFPGIAVAEEFLARNHSNEVLFVGTERGIEARLLPRLGYRLECITASGIKGQSPLAKIRSAAQLLYGYAQSRRILKEFRPDLVLGVGGYASAPVVLAARGMQIRRFIHEQNAIPGLTNKLLARFAEKVFISIEESRKFFPEDATILTGNPLRKEILWNVPLGQKTPASDEKLKLLVFGGSAGAHRINTAMIESLPFLAGVKERLIITHQTGEKDQAEVRKTYEQSGFAAEVTPFIDDMAAAYSNADMIVCRAGATTIAEVTACGKACIFIPYPYAADDHQRRNAEALLKKEAGYMILERELSGESLAFQVMELIAHPGKIEQTGRNARSLAQLDAAQVIVDEMTREQACTEK.

Residues 10 to 12, asparagine 124, arginine 165, serine 193, isoleucine 248, and glutamine 293 contribute to the UDP-N-acetyl-alpha-D-glucosamine site; that span reads TGG.

The protein belongs to the glycosyltransferase 28 family. MurG subfamily.

The protein localises to the cell inner membrane. The catalysed reaction is di-trans,octa-cis-undecaprenyl diphospho-N-acetyl-alpha-D-muramoyl-L-alanyl-D-glutamyl-meso-2,6-diaminopimeloyl-D-alanyl-D-alanine + UDP-N-acetyl-alpha-D-glucosamine = di-trans,octa-cis-undecaprenyl diphospho-[N-acetyl-alpha-D-glucosaminyl-(1-&gt;4)]-N-acetyl-alpha-D-muramoyl-L-alanyl-D-glutamyl-meso-2,6-diaminopimeloyl-D-alanyl-D-alanine + UDP + H(+). The protein operates within cell wall biogenesis; peptidoglycan biosynthesis. Functionally, cell wall formation. Catalyzes the transfer of a GlcNAc subunit on undecaprenyl-pyrophosphoryl-MurNAc-pentapeptide (lipid intermediate I) to form undecaprenyl-pyrophosphoryl-MurNAc-(pentapeptide)GlcNAc (lipid intermediate II). This chain is UDP-N-acetylglucosamine--N-acetylmuramyl-(pentapeptide) pyrophosphoryl-undecaprenol N-acetylglucosamine transferase, found in Geotalea uraniireducens (strain Rf4) (Geobacter uraniireducens).